Here is a 473-residue protein sequence, read N- to C-terminus: BPI fold-containing family B member 3 (473 aa).

The N-terminal stretch at 1 to 20 (MMPGVYALLLLWGLATPCLG) is a signal peptide. A glycan (N-linked (GlcNAc...) asparagine) is linked at asparagine 139. Cysteine 161 and cysteine 196 are oxidised to a cystine.

It belongs to the BPI/LBP/Plunc superfamily. BPI/LBP family. In terms of tissue distribution, highly expressed in olfactory mucosa but undetectable in thymus, kidney, lung, brain, spleen and liver.

It localises to the secreted. May have the capacity to recognize and bind specific classes of odorants. May act as a carrier molecule, transporting odorants across the mucus layer to access receptor sites. May serve as a primary defense mechanism by recognizing and removing potentially harmful odorants or pathogenic microorganisms from the mucosa or clearing excess odorant from mucus to enable new odorant stimuli to be received. In Rattus norvegicus (Rat), this protein is BPI fold-containing family B member 3.